The primary structure comprises 175 residues: Adenine phosphoribosyltransferase (175 aa).

It belongs to the purine/pyrimidine phosphoribosyltransferase family. As to quaternary structure, homodimer.

It is found in the cytoplasm. It carries out the reaction AMP + diphosphate = 5-phospho-alpha-D-ribose 1-diphosphate + adenine. It participates in purine metabolism; AMP biosynthesis via salvage pathway; AMP from adenine: step 1/1. Its function is as follows. Catalyzes a salvage reaction resulting in the formation of AMP, that is energically less costly than de novo synthesis. The chain is Adenine phosphoribosyltransferase from Caldicellulosiruptor saccharolyticus (strain ATCC 43494 / DSM 8903 / Tp8T 6331).